The chain runs to 257 residues: NAD-capped RNA hydrolase NudC (257 aa).

R69 is a substrate binding site. 2 residues coordinate Zn(2+): C98 and C101. E111 provides a ligand contact to substrate. Residues C116 and C119 each coordinate Zn(2+). Residue Y124 participates in substrate binding. Positions 125-248 (PQIAPCIIVA…TVARRLIEDT (124 aa)) constitute a Nudix hydrolase domain. 3 residues coordinate a divalent metal cation: A158, E174, and E178. A Nudix box motif is present at residues 159–180 (GFVEVGETLEQAVAREVMEESG). Substrate is bound at residue 192–199 (QPWPFPQS). A divalent metal cation is bound at residue E219. Residue A241 participates in substrate binding.

The protein belongs to the Nudix hydrolase family. NudC subfamily. As to quaternary structure, homodimer. Mg(2+) is required as a cofactor. It depends on Mn(2+) as a cofactor. Requires Zn(2+) as cofactor.

It catalyses the reaction a 5'-end NAD(+)-phospho-ribonucleoside in mRNA + H2O = a 5'-end phospho-adenosine-phospho-ribonucleoside in mRNA + beta-nicotinamide D-ribonucleotide + 2 H(+). The enzyme catalyses NAD(+) + H2O = beta-nicotinamide D-ribonucleotide + AMP + 2 H(+). The catalysed reaction is NADH + H2O = reduced beta-nicotinamide D-ribonucleotide + AMP + 2 H(+). Its function is as follows. mRNA decapping enzyme that specifically removes the nicotinamide adenine dinucleotide (NAD) cap from a subset of mRNAs by hydrolyzing the diphosphate linkage to produce nicotinamide mononucleotide (NMN) and 5' monophosphate mRNA. The NAD-cap is present at the 5'-end of some mRNAs and stabilizes RNA against 5'-processing. Has preference for mRNAs with a 5'-end purine. Catalyzes the hydrolysis of a broad range of dinucleotide pyrophosphates. This chain is NAD-capped RNA hydrolase NudC, found in Salmonella typhimurium (strain LT2 / SGSC1412 / ATCC 700720).